Consider the following 176-residue polypeptide: Large ribosomal subunit protein eL20 (176 aa).

Lysine 11 is covalently cross-linked (Glycyl lysine isopeptide (Lys-Gly) (interchain with G-Cter in SUMO2)). Tyrosine 63 carries the phosphotyrosine modification. Serine 71 carries the post-translational modification Phosphoserine. Lysine 76 is modified (N6-succinyllysine). A Phosphoserine modification is found at serine 123. Glycyl lysine isopeptide (Lys-Gly) (interchain with G-Cter in SUMO2) cross-links involve residues lysine 128 and lysine 170.

It belongs to the eukaryotic ribosomal protein eL20 family. As to quaternary structure, component of the large ribosomal subunit. Binds IPO9 with high affinity.

It localises to the cytoplasm. Its function is as follows. Component of the large ribosomal subunit. The ribosome is a large ribonucleoprotein complex responsible for the synthesis of proteins in the cell. This chain is Large ribosomal subunit protein eL20 (RPL18A), found in Oryctolagus cuniculus (Rabbit).